The following is a 71-amino-acid chain: MKLTCVVIVAVLLLTACQLITADDSRGTQKHRALRSDTKLSMSTRCKGTGKPCSRIAYNCCTGSCRSGKCG.

Residues 1–22 (MKLTCVVIVAVLLLTACQLITA) form the signal peptide. Residues 23–45 (DDSRGTQKHRALRSDTKLSMSTR) constitute a propeptide that is removed on maturation. 3 cysteine pairs are disulfide-bonded: Cys46-Cys61, Cys53-Cys65, and Cys60-Cys70. Residue Pro52 is modified to 4-hydroxyproline; partial. Position 70 is a cysteine amide (Cys70).

Belongs to the conotoxin M superfamily. As to expression, expressed by the venom duct.

Its subcellular location is the secreted. Its function is as follows. Omega-conotoxins act at presynaptic membranes, they bind and block voltage-gated calcium channels (Cav). The sequence is that of Omega-conotoxin-like CnVIIE from Conus consors (Singed cone).